The chain runs to 959 residues: AP2-associated protein kinase 1 (959 aa).

N-acetylmethionine is present on Met-1. Over residues 1–11 (MKKFFDSRREQ) the composition is skewed to basic and acidic residues. A disordered region spans residues 1-27 (MKKFFDSRREQGSSGLGSGSSGGGGSS). At Ser-14 the chain carries Phosphoserine. Residues 14 to 27 (SGLGSGSSGGGGSS) show a composition bias toward gly residues. One can recognise a Protein kinase domain in the interval 46 to 315 (VTVDEVLAEG…QVSYFSFKLL (270 aa)). ATP-binding positions include 52–60 (LAEGGFALV) and Lys-74. The active-site Proton acceptor is Asp-176. Tyr-234 bears the Phosphotyrosine mark. Ser-235 is modified (phosphoserine). Residues 340–385 (SEAAVKKTQPKARLTDPIPTTETSIAPRQRPKAGQTQPNPGILPIQ) form a disordered region. Residues Thr-354 and Thr-389 each carry the phosphothreonine modification. Arg-391 carries the post-translational modification Omega-N-methylarginine. Disordered stretches follow at residues 398 to 514 (PLPQ…AVHP) and 578 to 630 (TAPQ…RAGH). Residues 404–419 (GPSNQPGLLPSVSQPK) are compositionally biased toward polar residues. The span at 420–435 (AQATPSQPLQSSQPKQ) shows a compositional bias: low complexity. Thr-441 carries the post-translational modification Phosphothreonine. Low complexity-rich tracts occupy residues 444-481 (QTPA…QPQQ), 494-510 (QQQQ…QQFQ), and 578-603 (TAPQ…KVQT). Thr-604 is subject to Phosphothreonine. Residues 609-625 (IQGQKVGSLTPPSSPKT) are compositionally biased toward polar residues. Ser-616 is modified (phosphoserine). Residue Thr-618 is modified to Phosphothreonine. Residues Ser-621, Ser-622, Ser-635, and Ser-648 each carry the phosphoserine modification. Thr-651 bears the Phosphothreonine mark. 4 disordered regions span residues 662-699 (SLNK…FDDD), 727-763 (GGSA…GGQA), 837-857 (PVAQ…TDSL), and 923-943 (ITKN…ESSL). A compositionally biased stretch (polar residues) spans 670-694 (TTTPSGSPRTSQQNVSNASEGSTWN). Ser-729 is subject to Phosphoserine. Polar residues-rich tracts occupy residues 738–752 (QPTQ…SFSA) and 842–857 (LPSQ…TDSL). The segment at 821-958 (DKADVAVESL…SLLLVDQLID (138 aa)) is clathrin-binding domain (CBD). 3 positions are modified to phosphoserine: Ser-844, Ser-935, and Ser-936. The segment covering 929–942 (GGHSRNSSGSSESS) has biased composition (low complexity).

Belongs to the protein kinase superfamily. Ser/Thr protein kinase family. Interacts (via CBD domain) with clathrin. Interacts with AP-2 complex. Interacts with NUMB. Interacts with alpha-adaptin. Interacts with EPS15 isoform 2. Interacts with membrane-bound activated NOTCH1 but not with the inactive full-length form of NOTCH1. Preferentially interacts with monoubiquitinated activated NOTCH1 compared to the non-ubiquitinated form. Autophosphorylated.

The protein resides in the cell membrane. Its subcellular location is the membrane. The protein localises to the clathrin-coated pit. It is found in the presynapse. It carries out the reaction L-seryl-[protein] + ATP = O-phospho-L-seryl-[protein] + ADP + H(+). The catalysed reaction is L-threonyl-[protein] + ATP = O-phospho-L-threonyl-[protein] + ADP + H(+). With respect to regulation, stimulated by clathrin. Its function is as follows. Regulates clathrin-mediated endocytosis by phosphorylating the AP2M1/mu2 subunit of the adaptor protein complex 2 (AP-2) which ensures high affinity binding of AP-2 to cargo membrane proteins during the initial stages of endocytosis. Preferentially, may phosphorylate substrates on threonine residues. Regulates phosphorylation of other AP-2 subunits as well as AP-2 localization and AP-2-mediated internalization of ligand complexes. Phosphorylates NUMB and regulates its cellular localization, promoting NUMB localization to endosomes. Binds to and stabilizes the activated form of NOTCH1, increases its localization in endosomes and regulates its transcriptional activity. This chain is AP2-associated protein kinase 1 (Aak1), found in Mus musculus (Mouse).